The sequence spans 163 residues: Pheromone-binding protein 1 (163 aa).

The first 21 residues, 1–21 (MLGKISLLLLPVFVAINLVHS), serve as a signal peptide directing secretion. 3 disulfide bridges follow: Cys40–Cys75, Cys71–Cys129, and Cys118–Cys138.

The protein belongs to the PBP/GOBP family. Antenna.

Functionally, this major soluble protein in olfactory sensilla of male moths might serve to solubilize the extremely hydrophobic pheromone molecules and to transport pheromone through the aqueous lymph to receptors located on olfactory cilia. The sequence is that of Pheromone-binding protein 1 from Antheraea pernyi (Chinese oak silk moth).